We begin with the raw amino-acid sequence, 312 residues long: MSIDIETTLQKAYPDFDVLLKSRPATHYKVYKIPKRTIGYRIIAQPTPRVKAIQRDIIEILKQHTHIHDAATAYVDGKNILDNAKIHQSSVYLLKLDLVNFFNKITPELLFKALARQKVDISDTNKNLLKQFCFWNRTKRKNGALVLSVGAPSSPFISNIVMSSFDEEISSFCKENKISYSRYADDLTFSTNERDVLGLAHQKVKTTLIRFFGTRIIINNNKIVYSSKAHNRHVTGVTLTNNNKLSLGRERKRYITSLVFKFKEGKLSNVDINHLRGLIGFAYNIEPAFIERLEKKYGESTIKSIKKYSEGG.

The region spanning 14 to 239 (PDFDVLLKSR…HNRHVTGVTL (226 aa)) is the Reverse transcriptase domain. Residues Asp97, Asp185, and Asp186 each contribute to the Mg(2+) site.

It belongs to the bacterial reverse transcriptase family.

It carries out the reaction DNA(n) + a 2'-deoxyribonucleoside 5'-triphosphate = DNA(n+1) + diphosphate. Its function is as follows. Reverse transcriptase (RT) component of antiviral defense system retron Ec83, composed of a non-coding RNA (ncRNA), this reverse transcriptase (RT), a probable ATPase and a putative HNH endonuclease. Expression of retron Ec83 confers protection against bacteriophages T2, T4 and T6. At multiplicity of infection (MOI) of 0.02 cultures slow growth when infected with T4 but do not collapse, at MOI 2 cultures enter growth stasis. Responsible for synthesis of msDNA-Ec83 (a linear ssDNA with a 5'-terminal phosphate residue). Unlike most known msDNAs the mature product from the original strain does not have an RNA component. When the ncRNA plus RT are expressed in strain K12 / JM109 only linear DNA is seen in stationary phase cells, but logarithmic phase cells have both a linear and branched msDNA (a branched molecule with RNA linked by a 2',5'-phosphodiester bond to ssDNA, a 'classic' retron). The branched msDNA is probably the precursor for the mature linear msDNA, the precursor is cleaved endonucleolytically by ExoVII (xseA-xseB) leaving the observed mature 5'-phosphate ssDNA terminus. The retron transcript serves as primer (from a conserved internal G residue) and template for the reaction, and codes for the RT. Overexpression of the ncRNA and RT, which leads to increased levels of msDNA, is mutagenic in vivo. This may be due to a mismatch in the msDNA stem which binds and sequesters MutS and/or MutL. The polypeptide is Retron Ec83 reverse transcriptase (Escherichia coli).